The sequence spans 384 residues: Probable zinc-binding alcohol dehydrogenase Rv1895 (384 aa).

6 residues coordinate Zn(2+): cysteine 38, histidine 59, cysteine 89, cysteine 92, cysteine 95, and cysteine 103.

Belongs to the zinc-containing alcohol dehydrogenase family. Requires Zn(2+) as cofactor.

The catalysed reaction is a primary alcohol + NAD(+) = an aldehyde + NADH + H(+). It carries out the reaction a secondary alcohol + NAD(+) = a ketone + NADH + H(+). In Mycobacterium tuberculosis (strain ATCC 25618 / H37Rv), this protein is Probable zinc-binding alcohol dehydrogenase Rv1895.